A 427-amino-acid chain; its full sequence is Flotillin-1 (427 aa).

Phosphoserine is present on residues serine 19, serine 163, and serine 385. The residue at position 387 (threonine 387) is a Phosphothreonine.

The protein belongs to the band 7/mec-2 family. Flotillin subfamily. As to quaternary structure, heterooligomeric complex of flotillin-1 and flotillin-2 and caveolin-1 and caveolin-2. Interacts with ECPAS.

Its subcellular location is the cell membrane. The protein localises to the endosome. It is found in the membrane. The protein resides in the caveola. It localises to the melanosome. Its subcellular location is the membrane raft. May act as a scaffolding protein within caveolar membranes, functionally participating in formation of caveolae or caveolae-like vesicles. This is Flotillin-1 (FLOT1) from Homo sapiens (Human).